Reading from the N-terminus, the 286-residue chain is Ribose-5-phosphate isomerase (286 aa).

Belongs to the ribose 5-phosphate isomerase family.

It localises to the cytoplasm. It catalyses the reaction aldehydo-D-ribose 5-phosphate = D-ribulose 5-phosphate. The protein operates within carbohydrate degradation; pentose phosphate pathway; D-ribose 5-phosphate from D-ribulose 5-phosphate (non-oxidative stage): step 1/1. The polypeptide is Ribose-5-phosphate isomerase (RKI1) (Mycosarcoma maydis (Corn smut fungus)).